Reading from the N-terminus, the 102-residue chain is Flagellar hook-basal body complex protein FliE (102 aa).

Belongs to the FliE family.

The protein localises to the bacterial flagellum basal body. The protein is Flagellar hook-basal body complex protein FliE of Halalkalibacterium halodurans (strain ATCC BAA-125 / DSM 18197 / FERM 7344 / JCM 9153 / C-125) (Bacillus halodurans).